The sequence spans 89 residues: Small ribosomal subunit protein uS15 (89 aa).

Belongs to the universal ribosomal protein uS15 family. Part of the 30S ribosomal subunit. Forms a bridge to the 50S subunit in the 70S ribosome, contacting the 23S rRNA.

Functionally, one of the primary rRNA binding proteins, it binds directly to 16S rRNA where it helps nucleate assembly of the platform of the 30S subunit by binding and bridging several RNA helices of the 16S rRNA. Its function is as follows. Forms an intersubunit bridge (bridge B4) with the 23S rRNA of the 50S subunit in the ribosome. This Shewanella frigidimarina (strain NCIMB 400) protein is Small ribosomal subunit protein uS15.